Reading from the N-terminus, the 140-residue chain is Cystatin-like 1 (140 aa).

The N-terminal stretch at 1-23 (MEMKARGLRIPLLLLLVTVVVMA) is a signal peptide. A Cystatin domain is found at 32-126 (GGFKEKAMSK…CKSLIYSVPW (95 aa)). N-linked (GlcNAc...) asparagine glycosylation occurs at Asn-45. 2 cysteine pairs are disulfide-bonded: Cys-94/Cys-104 and Cys-117/Cys-137.

The protein belongs to the cystatin family. As to expression, highly expressed in testis where it localizes to spermatogonium, spermatocyes and round spermatids. Not detected in spermatozoa. Also detected in epididymis, cerebrum and pituitary.

It localises to the secreted. This chain is Cystatin-like 1, found in Mus musculus (Mouse).